The primary structure comprises 576 residues: uncharacterized protein (576 aa).

Residues 41–78 (EKESESKLNSKSTTLQSSDSEDWDSEENEDDITDVGVP) are disordered. Residues 49 to 58 (NSKSTTLQSS) are compositionally biased toward low complexity. Acidic residues predominate over residues 59–73 (DSEDWDSEENEDDIT). WD repeat units lie at residues 87–126 (GHSK…ATNP), 195–235 (GHIA…SQLE), 248–288 (LSRI…KRPV), 296–335 (LPQQ…KCVN), and 393–433 (TVTA…RGVK). A disordered region spans residues 547 to 576 (SETQPTPIYQGVTEGDISSEEGNPSKKQKR).

This is an uncharacterized protein from Schizosaccharomyces pombe (strain 972 / ATCC 24843) (Fission yeast).